Reading from the N-terminus, the 412-residue chain is MTNYRVESSSGRAARKMRLALMGPAFIAAIGYIDPGNFATNIQAGASFGYQLLWVVVWANLMAMLIQILSAKLGIATGKNLAEQIRDHYPRPVVWFYWVQAEIIAMATDLAEFIGAAIGFKLILGVSLLQGAVLTGIATFLILMLQRRGQKPLEKVIGGLLLFVAAAYIVELIFSQPNLAQLGKGMVIPSLPTSEAVFLAAGVLGATIMPHVIYLHSSLTQHLHGGSRQQRYSATKWDVAIAMTIAGFVNLAMMATAAAAFHFSGHTGVADLDEAYLTLQPLLSHAAATVFGLSLVAAGLSSTVVGTLAGQVVMQGFIRFHIPLWVRRTVTMLPSFIVILMGLDPTRILVMSQVLLSFGIALALVPLLIFTSDSKLMGDLVNSKRVKQTGWVIVVLVVALNIWLLVGTALGL.

At 1-19 the chain is on the cytoplasmic side; that stretch reads MTNYRVESSSGRAARKMRL. The chain crosses the membrane as a helical span at residues 20-39; sequence ALMGPAFIAAIGYIDPGNFA. The Periplasmic segment spans residues 40-51; it reads TNIQAGASFGYQ. The chain crosses the membrane as a helical span at residues 52-71; the sequence is LLWVVVWANLMAMLIQILSA. Over 72-95 the chain is Cytoplasmic; it reads KLGIATGKNLAEQIRDHYPRPVVW. Residues 96 to 118 traverse the membrane as a helical segment; the sequence is FYWVQAEIIAMATDLAEFIGAAI. Residues 119–125 are Periplasmic-facing; the sequence is GFKLILG. The helical transmembrane segment at 126 to 145 threads the bilayer; that stretch reads VSLLQGAVLTGIATFLILML. The Cytoplasmic portion of the chain corresponds to 146–155; that stretch reads QRRGQKPLEK. The chain crosses the membrane as a helical span at residues 156-175; sequence VIGGLLLFVAAAYIVELIFS. Topologically, residues 176–196 are periplasmic; that stretch reads QPNLAQLGKGMVIPSLPTSEA. The helical transmembrane segment at 197–220 threads the bilayer; that stretch reads VFLAAGVLGATIMPHVIYLHSSLT. At 221–238 the chain is on the cytoplasmic side; the sequence is QHLHGGSRQQRYSATKWD. A helical membrane pass occupies residues 239–258; the sequence is VAIAMTIAGFVNLAMMATAA. The Periplasmic portion of the chain corresponds to 259 to 276; it reads AAFHFSGHTGVADLDEAY. Residues 277–297 form a helical membrane-spanning segment; sequence LTLQPLLSHAAATVFGLSLVA. Topologically, residues 298–327 are cytoplasmic; sequence AGLSSTVVGTLAGQVVMQGFIRFHIPLWVR. Residues 328-344 form a helical membrane-spanning segment; sequence RTVTMLPSFIVILMGLD. The Periplasmic segment spans residues 345-350; the sequence is PTRILV. Residues 351-370 traverse the membrane as a helical segment; the sequence is MSQVLLSFGIALALVPLLIF. Over 371–387 the chain is Cytoplasmic; the sequence is TSDSKLMGDLVNSKRVK. The chain crosses the membrane as a helical span at residues 388 to 406; it reads QTGWVIVVLVVALNIWLLV. Over 407–412 the chain is Periplasmic; that stretch reads GTALGL.

This sequence belongs to the NRAMP family.

It is found in the cell inner membrane. In terms of biological role, h(+)-stimulated, divalent metal cation uptake system. This Escherichia fergusonii (strain ATCC 35469 / DSM 13698 / CCUG 18766 / IAM 14443 / JCM 21226 / LMG 7866 / NBRC 102419 / NCTC 12128 / CDC 0568-73) protein is Divalent metal cation transporter MntH.